A 702-amino-acid polypeptide reads, in one-letter code: p-hydroxybenzoic acid--AMP ligase FadD22 (702 aa).

Residues Glu538–Leu616 enclose the Carrier domain. Ser576 is modified (O-(pantetheine 4'-phosphoryl)serine).

It belongs to the ATP-dependent AMP-binding enzyme family.

The enzyme catalyses holo-[4-hydroxyphenylalkanoate synthase] + 4-hydroxybenzoate + ATP = 4-hydroxyphenyl-[4-hydroxyphenylalkanoate synthase] + AMP + diphosphate. It participates in lipid metabolism; fatty acid biosynthesis. Its function is as follows. Catalyzes the adenylation of p-hydroxybenzoic acid (pHBA) to form p-hydroxybenzoic acid-AMP (pHBA-AMP), which is converted directly to p-hydroxybenzoyl-S-FadD22 (pHBA-S-FAdD22) thioester intermediate in a CoA-independent manner by attack of the phosphopantetheine thiol of FadD22. This intermediate primes the biosynthesis of the phenolphthiocerol (PPOL) by presenting the pHBA starter unit for elongation by Pks15/1. PPOL is an important intermediate in the biosynthesis of phenolic glycolipid (mycosid B). This Mycobacterium marinum (strain ATCC BAA-535 / M) protein is p-hydroxybenzoic acid--AMP ligase FadD22 (fadD22).